A 311-amino-acid chain; its full sequence is HPr kinase/phosphorylase (311 aa).

Active-site residues include H138 and K159. 153–160 (GSSGIGKS) lines the ATP pocket. Mg(2+) is bound at residue S160. Catalysis depends on D177, which acts as the Proton acceptor; for phosphorylation activity. Proton donor; for dephosphorylation activity. The interval 201 to 210 (LEIRGVGIIN) is important for the catalytic mechanism of both phosphorylation and dephosphorylation. Position 202 (E202) interacts with Mg(2+). R243 is an active-site residue. Positions 264-269 (PVRPGR) are important for the catalytic mechanism of dephosphorylation.

This sequence belongs to the HPrK/P family. As to quaternary structure, homohexamer. Mg(2+) is required as a cofactor.

The enzyme catalyses [HPr protein]-L-serine + ATP = [HPr protein]-O-phospho-L-serine + ADP + H(+). It catalyses the reaction [HPr protein]-O-phospho-L-serine + phosphate + H(+) = [HPr protein]-L-serine + diphosphate. Its function is as follows. Catalyzes the ATP- as well as the pyrophosphate-dependent phosphorylation of a specific serine residue in HPr, a phosphocarrier protein of the phosphoenolpyruvate-dependent sugar phosphotransferase system (PTS). HprK/P also catalyzes the pyrophosphate-producing, inorganic phosphate-dependent dephosphorylation (phosphorolysis) of seryl-phosphorylated HPr (P-Ser-HPr). The two antagonistic activities of HprK/P are regulated by several intracellular metabolites, which change their concentration in response to the absence or presence of rapidly metabolisable carbon sources (glucose, fructose, etc.) in the growth medium. Therefore, by controlling the phosphorylation state of HPr, HPrK/P is a sensor enzyme that plays a major role in the regulation of carbon metabolism and sugar transport: it mediates carbon catabolite repression (CCR), and regulates PTS-catalyzed carbohydrate uptake and inducer exclusion. The sequence is that of HPr kinase/phosphorylase from Brevibacillus brevis (strain 47 / JCM 6285 / NBRC 100599).